Reading from the N-terminus, the 130-residue chain is MSKKKLNQPKKRIKRQILDGIAHIHASFNNTIVTITDRKGNTLGWATSGGSGFRGSRKSTPFAAQVAAEKCADRVKDYGIKNLEVMIKGPGPGRESTIRALNSSGFRITNIIDVTPIPHNGCRPSKKRRV.

The protein belongs to the universal ribosomal protein uS11 family. In terms of assembly, part of the 30S ribosomal subunit. Interacts with proteins S7 and S18. Binds to IF-3.

Functionally, located on the platform of the 30S subunit, it bridges several disparate RNA helices of the 16S rRNA. Forms part of the Shine-Dalgarno cleft in the 70S ribosome. This is Small ribosomal subunit protein uS11 from Buchnera aphidicola subsp. Cinara cedri (strain Cc).